The chain runs to 606 residues: MLKSFSLIGKNITKNVSLSSSNKFLFGKNHQNMKSIYSSIRFFSSEQELPPRDSDQFDVVIVGAGPSGLSTAIRLKQLSEKAGKDLRVCVVEKGSEVGSHILSGAVMDPKALNELIPDWKEKGAPLITEVKQDKFYFLTENRSLRLPTPRLMHNEGNYIISLGNVVRWLGEQAESMGVEVYPSFAASEVLYHDNGAVRGIATNDMGIAKDGSLTSNFTRGMELNARLTIFAEGCRGSLTKGLFEKFNLRDECEPQTFGLGIKETWEIKPEKHQQGLVIHTLGYPLSDELLGGSFIYHAENNTVNLGLVVGLDYSNPYLNPYQEFQKLKLHPMVKDMLEGGTCIQYGARTINEGGFQSIPKLVFPGGALVGCTAGFVHVPKVKGSHYAMKTGILAAEAAFPQLISQQEKEQEQEQDKPSVEPLLINEYPEELKKSWVWKELREVRNYRPSLHWGTIPGLIYGALEMYIFRGHTPWTLSNGKPDNERLKPAAECKKIEYKKPDGQITFDLMTSVMRSGTNHEENQPIHLKVRDMEVAKKVNRDIYDGPEGRFCPAGVYEWVEGEKGEKELVRNSVFCLHCKTCDIKDPTQNIDFTVPEGGGGPKYGAM.

59-73 (VVIVGAGPSGLSTAI) serves as a coordination point for FAD. The chain crosses the membrane as a helical span at residues 448-468 (PSLHWGTIPGLIYGALEMYIF). [4Fe-4S] cluster is bound by residues C551, C575, C578, and C581.

Belongs to the ETF-QO/FixC family. As to quaternary structure, monomer. The cofactor is [4Fe-4S] cluster. FAD is required as a cofactor.

It localises to the mitochondrion inner membrane. It catalyses the reaction a ubiquinone + reduced [electron-transfer flavoprotein] = a ubiquinol + oxidized [electron-transfer flavoprotein] + H(+). Functionally, accepts electrons from ETF and reduces ubiquinone. In Dictyostelium discoideum (Social amoeba), this protein is Electron transfer flavoprotein-ubiquinone oxidoreductase, mitochondrial (etfdh).